The following is a 307-amino-acid chain: Bifunctional protein FolD (307 aa).

NADP(+) contacts are provided by residues 170-172 (GRS), Ser195, and Ile236.

The protein belongs to the tetrahydrofolate dehydrogenase/cyclohydrolase family. In terms of assembly, homodimer.

The enzyme catalyses (6R)-5,10-methylene-5,6,7,8-tetrahydrofolate + NADP(+) = (6R)-5,10-methenyltetrahydrofolate + NADPH. It catalyses the reaction (6R)-5,10-methenyltetrahydrofolate + H2O = (6R)-10-formyltetrahydrofolate + H(+). The protein operates within one-carbon metabolism; tetrahydrofolate interconversion. Functionally, catalyzes the oxidation of 5,10-methylenetetrahydrofolate to 5,10-methenyltetrahydrofolate and then the hydrolysis of 5,10-methenyltetrahydrofolate to 10-formyltetrahydrofolate. The protein is Bifunctional protein FolD of Sinorhizobium fredii (strain NBRC 101917 / NGR234).